We begin with the raw amino-acid sequence, 284 residues long: RNase adapter protein RapZ (284 aa).

An ATP-binding site is contributed by 8 to 15 (GRSGSGKS). 56–59 (DVRN) contacts GTP. The RNA-binding stretch occupies residues 266–284 (RSRGKNVQSRHRTLEKRKT).

It belongs to the RapZ-like family. RapZ subfamily. Homotrimer.

In terms of biological role, modulates the synthesis of GlmS, by affecting the processing and stability of the regulatory small RNA GlmZ. When glucosamine-6-phosphate (GlcN6P) concentrations are high in the cell, RapZ binds GlmZ and targets it to cleavage by RNase E. Consequently, GlmZ is inactivated and unable to activate GlmS synthesis. Under low GlcN6P concentrations, RapZ is sequestered and inactivated by an other regulatory small RNA, GlmY, preventing GlmZ degradation and leading to synthesis of GlmS. The polypeptide is RNase adapter protein RapZ (Escherichia fergusonii (strain ATCC 35469 / DSM 13698 / CCUG 18766 / IAM 14443 / JCM 21226 / LMG 7866 / NBRC 102419 / NCTC 12128 / CDC 0568-73)).